We begin with the raw amino-acid sequence, 209 residues long: Type III pantothenate kinase (209 aa).

Residue 5–12 coordinates ATP; that stretch reads DIGNSNAN. Substrate is bound by residues tyrosine 68 and 72-75; that span reads GIDR. Aspartate 74 functions as the Proton acceptor in the catalytic mechanism. K(+) is bound at residue aspartate 89. An ATP-binding site is contributed by serine 92. Residue threonine 144 coordinates substrate.

It belongs to the type III pantothenate kinase family. Homodimer. The cofactor is NH4(+). It depends on K(+) as a cofactor.

The protein localises to the cytoplasm. The catalysed reaction is (R)-pantothenate + ATP = (R)-4'-phosphopantothenate + ADP + H(+). It functions in the pathway cofactor biosynthesis; coenzyme A biosynthesis; CoA from (R)-pantothenate: step 1/5. Functionally, catalyzes the phosphorylation of pantothenate (Pan), the first step in CoA biosynthesis. This is Type III pantothenate kinase from Campylobacter jejuni subsp. jejuni serotype O:2 (strain ATCC 700819 / NCTC 11168).